Reading from the N-terminus, the 226-residue chain is Protein GrpE (226 aa).

Disordered regions lie at residues 1 to 31 (MTPNDTENAARPLPEGAVDPAQDAAGAPDTL) and 189 to 226 (VSKGGPKAAEASKPAGEAPKPAGEAPKPAGDGQKPAEA). Residues 192–218 (GGPKAAEASKPAGEAPKPAGEAPKPAG) show a composition bias toward low complexity.

This sequence belongs to the GrpE family. Homodimer.

The protein resides in the cytoplasm. In terms of biological role, participates actively in the response to hyperosmotic and heat shock by preventing the aggregation of stress-denatured proteins, in association with DnaK and GrpE. It is the nucleotide exchange factor for DnaK and may function as a thermosensor. Unfolded proteins bind initially to DnaJ; upon interaction with the DnaJ-bound protein, DnaK hydrolyzes its bound ATP, resulting in the formation of a stable complex. GrpE releases ADP from DnaK; ATP binding to DnaK triggers the release of the substrate protein, thus completing the reaction cycle. Several rounds of ATP-dependent interactions between DnaJ, DnaK and GrpE are required for fully efficient folding. This chain is Protein GrpE, found in Methylobacterium nodulans (strain LMG 21967 / CNCM I-2342 / ORS 2060).